We begin with the raw amino-acid sequence, 433 residues long: Adenylosuccinate synthetase (433 aa).

Residues 11–17 and 39–41 each bind GTP; these read GDEGKGK and GHT. Aspartate 12 functions as the Proton acceptor in the catalytic mechanism. Residues aspartate 12 and glycine 39 each coordinate Mg(2+). Residues 12-15, 37-40, threonine 134, arginine 148, asparagine 230, threonine 245, and arginine 309 contribute to the IMP site; these read DEGK and NAGH. Histidine 40 functions as the Proton donor in the catalytic mechanism. Position 305–311 (305–311) interacts with substrate; the sequence is VTTGRKR. GTP contacts are provided by residues arginine 311, 337-339, and 419-421; these read KLD and GTG.

Belongs to the adenylosuccinate synthetase family. Homodimer. The cofactor is Mg(2+).

The protein resides in the cytoplasm. The enzyme catalyses IMP + L-aspartate + GTP = N(6)-(1,2-dicarboxyethyl)-AMP + GDP + phosphate + 2 H(+). It participates in purine metabolism; AMP biosynthesis via de novo pathway; AMP from IMP: step 1/2. In terms of biological role, plays an important role in the de novo pathway and in the salvage pathway of purine nucleotide biosynthesis. Catalyzes the first committed step in the biosynthesis of AMP from IMP. This chain is Adenylosuccinate synthetase, found in Eremothecium gossypii (strain ATCC 10895 / CBS 109.51 / FGSC 9923 / NRRL Y-1056) (Yeast).